Consider the following 141-residue polypeptide: Proteasome maturation protein (141 aa).

A Glycyl lysine isopeptide (Lys-Gly) (interchain with G-Cter in SUMO2) cross-link involves residue Lys39. Positions 68 to 72 (RNIQG) match the High-affinity association with the preproteasome motif.

The protein belongs to the POMP/UMP1 family. Constituent of preproteasomes, but not of mature 20S proteasomes. Within the preproteasome, may directly interact with PSMB1/beta6, PSMB4/beta7, PSMB5/beta5, PSMB6/beta1 and PSMB9/beta1i. Interaction with PSMB8/beta5i has been observed in PubMed:10973495, but not in PubMed:10926487. Forms tetramers. Strongly expressed from the basal layer to the granular layer of healthy epidermis, whereas in KLICK patients there is a gradual decrease of expression toward the granular layer.

It is found in the cytoplasm. The protein resides in the cytosol. The protein localises to the nucleus. Its subcellular location is the microsome membrane. Functionally, molecular chaperone essential for the assembly of standard proteasomes and immunoproteasomes. Degraded after completion of proteasome maturation. Mediates the association of 20S preproteasome with the endoplasmic reticulum. This is Proteasome maturation protein from Homo sapiens (Human).